The primary structure comprises 693 residues: Polyribonucleotide nucleotidyltransferase (693 aa).

Residues Asp487 and Asp493 each contribute to the Mg(2+) site. The KH domain maps to 554–613 (PRIYTIKINPEKIKDVIGKGGSIIRMLTEETGTVIEIKDDGIVKISAINGEKAKYAIKRI). In terms of domain architecture, S1 motif spans 623 to 691 (GKIYSGKVTR…RQGRIRLSMK (69 aa)).

This sequence belongs to the polyribonucleotide nucleotidyltransferase family. Component of the RNA degradosome, which is a multiprotein complex involved in RNA processing and mRNA degradation. It depends on Mg(2+) as a cofactor.

It is found in the cytoplasm. It carries out the reaction RNA(n+1) + phosphate = RNA(n) + a ribonucleoside 5'-diphosphate. Involved in mRNA degradation. Catalyzes the phosphorolysis of single-stranded polyribonucleotides processively in the 3'- to 5'-direction. This Buchnera aphidicola subsp. Cinara cedri (strain Cc) protein is Polyribonucleotide nucleotidyltransferase.